Here is a 978-residue protein sequence, read N- to C-terminus: Chaperone protein ClpB2, chloroplastic (978 aa).

Residues 1 to 76 (MAAAPPLAAG…RMPPRTLSVR (76 aa)) constitute a chloroplast transit peptide. One can recognise a Clp R domain in the interval 85-229 (TQQEFTEMAW…KTAIESIRGK (145 aa)). Repeat regions lie at residues 89–154 (FTEM…IQRQ) and 166–229 (LGRD…IRGK). The i stretch occupies residues 244 to 492 (LDKYGKDLTA…KLKMEITSKP (249 aa)). Residues 289-296 (GEPGVGKT) and 692-699 (GPTGVGKT) contribute to the ATP site. The II stretch occupies residues 618 to 809 (VTQDDIAEIV…IIIMTSNVGS (192 aa)).

This sequence belongs to the ClpA/ClpB family.

The protein localises to the plastid. It localises to the chloroplast. Functionally, molecular chaperone that may play a role in chloroplast development. The chain is Chaperone protein ClpB2, chloroplastic (CLPB2) from Oryza sativa subsp. japonica (Rice).